A 67-amino-acid chain; its full sequence is uncharacterized protein (67 aa).

The stretch at Ala-17 to Gln-47 forms a coiled coil.

This is an uncharacterized protein from Bacillus subtilis (strain 168).